A 369-amino-acid chain; its full sequence is Peptide chain release factor 2 (369 aa).

An N5-methylglutamine modification is found at Gln251.

It belongs to the prokaryotic/mitochondrial release factor family. In terms of processing, methylated by PrmC. Methylation increases the termination efficiency of RF2.

It localises to the cytoplasm. In terms of biological role, peptide chain release factor 2 directs the termination of translation in response to the peptide chain termination codons UGA and UAA. In Chlamydia muridarum (strain MoPn / Nigg), this protein is Peptide chain release factor 2 (prfB).